Consider the following 560-residue polypeptide: Putative transport protein VP1232 (560 aa).

Helical transmembrane passes span 8 to 28, 37 to 57, 66 to 86, 91 to 111, and 164 to 184; these read LLDQ…LAIG, LGNS…GFSF, FMLF…GIFF, HYFI…YGLS, and VGYA…AKLL. RCK C-terminal domains lie at 205-292 and 293-376; these read LGNS…FRNG and KEVF…KIGF. 6 consecutive transmembrane segments (helical) span residues 386–406, 409–429, 443–463, 478–498, 506–526, and 539–559; these read LLAF…TMTF, VSFS…LGFL, ALNM…GLSA, VIGL…LVGA, ALLF…DVVN, and AGTY…LIIL.

It belongs to the AAE transporter (TC 2.A.81) family. YbjL subfamily.

It is found in the cell membrane. The protein is Putative transport protein VP1232 of Vibrio parahaemolyticus serotype O3:K6 (strain RIMD 2210633).